A 138-amino-acid chain; its full sequence is Acidic phospholipase A2 Cvv-E6f (138 aa).

Positions 1 to 16 (MRTLWIVAVLLLGVEG) are cleaved as a signal peptide. Disulfide bonds link cysteine 42-cysteine 131, cysteine 44-cysteine 60, cysteine 59-cysteine 111, cysteine 65-cysteine 138, cysteine 66-cysteine 104, cysteine 73-cysteine 97, and cysteine 91-cysteine 102. Ca(2+) contacts are provided by tyrosine 43, glycine 45, and glycine 47. Residue histidine 63 is part of the active site. Aspartate 64 lines the Ca(2+) pocket. The active site involves aspartate 105.

Requires Ca(2+) as cofactor. As to expression, expressed by the venom gland.

It localises to the secreted. It carries out the reaction a 1,2-diacyl-sn-glycero-3-phosphocholine + H2O = a 1-acyl-sn-glycero-3-phosphocholine + a fatty acid + H(+). Functionally, snake venom phospholipase A2 (PLA2) that shows very low inhibition of ADP-induced platelet aggregation in platelet-rich plasma of human, rabbit and guinea pig. In vivo, shows efficient edema-inducing activities in rat paws. PLA2 catalyzes the calcium-dependent hydrolysis of the 2-acyl groups in 3-sn-phosphoglycerides. The chain is Acidic phospholipase A2 Cvv-E6f from Crotalus viridis viridis (Prairie rattlesnake).